Reading from the N-terminus, the 96-residue chain is Dynein light chain roadblock-type 1 (96 aa).

Ala-2 is subject to N-acetylalanine.

It belongs to the GAMAD family. As to quaternary structure, homodimer. The cytoplasmic dynein 1 complex consists of two catalytic heavy chains (HCs) and a number of non-catalytic subunits presented by intermediate chains (ICs), light intermediate chains (LICs) and light chains (LCs); the composition seems to vary in respect to the IC, LIC and LC composition. The heavy chain homodimer serves as a scaffold for the probable homodimeric assembly of the respective non-catalytic subunits. The ICs and LICs bind directly to the HC dimer and the LCs assemble on the IC dimer. Interacts with DYNLRB2. Interacts with DYNC1I1 and DYNC1I2. Interacts with RAB6A isoform 1 (GTP-bound); the interaction is direct. Interacts with RAB6A isoform 2 (GDP-bound); the interaction is direct. Interacts with RAB6B (GDP-bound).

It is found in the cytoplasm. It localises to the cytoskeleton. In terms of biological role, acts as one of several non-catalytic accessory components of the cytoplasmic dynein 1 complex that are thought to be involved in linking dynein to cargos and to adapter proteins that regulate dynein function. Cytoplasmic dynein 1 acts as a motor for the intracellular retrograde motility of vesicles and organelles along microtubules. The chain is Dynein light chain roadblock-type 1 (Dynlrb1) from Mus musculus (Mouse).